A 550-amino-acid polypeptide reads, in one-letter code: Leucine-rich repeat LGI family member 2 (550 aa).

An N-terminal signal peptide occupies residues 1 to 25; the sequence is MALWRGGGALGLLLLSAACLIPPSA. The LRRNT domain maps to 26-62; it reads QVRRLARCPATCSCTKESIICVGSSWVPRIVPGDISS. Residue asparagine 67 is glycosylated (N-linked (GlcNAc...) asparagine). LRR repeat units lie at residues 83–104 and 107–128; these read SLQLLLLNSNSFTVIRDDAFAG and HLEYLFIEGNKIETISRNAFRG. The LRRCT domain maps to 140–190; the sequence is NKFECDCKAKWLYLWLKMTNSTVSDVLCIGPPEYQEKKLNEVTSFDYECTT. Asparagine 159 is a glycosylation site (N-linked (GlcNAc...) asparagine). EAR repeat units follow at residues 224 to 266, 270 to 312, 316 to 363, 365 to 408, 412 to 455, 457 to 499, and 503 to 545; these read DFVV…EWDH, NFRS…KYDE, KFVK…KWNS, GFYS…QWNK, KFVP…RWNS, QFVE…QWDK, and QFKK…EHII. An N-linked (GlcNAc...) asparagine glycan is attached at asparagine 276. The N-linked (GlcNAc...) asparagine glycan is linked to asparagine 407.

In terms of tissue distribution, brain.

It localises to the secreted. Required for the development of soma-targeting inhibitory GABAergic synapses made by parvalbumin-positive basket cells. The polypeptide is Leucine-rich repeat LGI family member 2 (Lgi2) (Mus musculus (Mouse)).